A 184-amino-acid chain; its full sequence is Probable RNA 2'-phosphotransferase (184 aa).

It belongs to the KptA/TPT1 family.

Removes the 2'-phosphate from RNA via an intermediate in which the phosphate is ADP-ribosylated by NAD followed by a presumed transesterification to release the RNA and generate ADP-ribose 1''-2''-cyclic phosphate (APPR&gt;P). May function as an ADP-ribosylase. The protein is Probable RNA 2'-phosphotransferase of Rhizobium leguminosarum bv. trifolii (strain WSM2304).